A 1418-amino-acid chain; its full sequence is MLSQKFSPRRSGRHVTGSFESSFRFLREEDADVLRIRRGSMSPEPENKEKWLKMSYEAEKTCLLAPQESQTPCVCHTANEKYEIPGMGDDSVLEMLSYSKFSDLETWLCMPSTLLPRSRDSVCSLPPPSHENGTADTDRESRPPENTSINLSQCQERKTHLLPPSSLMPVSASPTSSTPLRTTSTPLPKPNRDSGQGGVSVRKRRRLAASPGGLHWDASGSVLRDHDRGETPSLSEVKRFPRSVDSESLVPELWRDRAPLRKTISIDDRLLQQTPREHHRLLSRLERGKKKLRNINSLGATGRYETHKKSESRISRLAQRLNQRQSDAALIKDFRPLFLLSGSAGSSQSLDRNFSISMSQQMQNLQLTQSKKGAGPASPSAAKRLYRNLSEKFKGSHSSFEDAYFFGRSDRIRKVSNIQSSEALFEAVEQQDLDAVQILLFQYTADELDLNTPNSEGLTPLDISIMTNNVPIAKLLLKAGGKESPHFVSLESRDAHLSALVQEAQRRASELSNQVMRESLSLETSDKEKQLKAWEWRCKLYKRMRTGFEHARQPEAPLMVRLSVTGSTTLTVSFQEPASMNSAVVTKYKVEWSCLKDFSLLAGELILENLQSLKCTITGLTMGRQYYVQVSAYNMKGWGPAQLSQPPSAVPSNWKDCDGRESRRRGHIEAMERLLQQVRATHQHYCCGDTSKLQNPSRKQSVSRSLKHLFHSSTKFVKSLKRGVYIASVFYHKDSLLVTNEDQIPIVEVDDSYSSSLMQDFLWFTKLSCMWEDVRWLRQSLAVSTSSSSTLQSRQKMLAAAGQLQNLLGTHNLGRVHYEPIKDRHGNVLLVTVREMDSLYSFFNGKWMQVSKLQSQRKSLSTPEEPYALDILLITIQDILAYQRRSQHRLSSGLYLGYLKLSSSVDQIKVLVPQRMPNMLCHTKIRDNWNVSRDEWEWLQSLSGPVEVERADQATGCLLFSELQTAIKSLLHQINLPLHQAKHFRLYTHEVLELGHNVSFLLLLPASDDVCSAPGQTNPYTPHSGFLNLPLQMFELVHFCSYKEKFISLYCRLSSVLDLDALITQQAFREAITDSEVSTAKQRHQHILDYIQQLDEMWREVRWITNALQYARYKQPLGWVPITWLVDVSVEPPVQKNDSTSSNTDYVPTPSPSPEMRRRKPTIESQPGSDEEGCSEVFLPTDSDYDSSDALSPRDLDLVYSSAQDLSHQAVHVLSGSAPDVLQMHDLKYSVCSKSILETESCTKDLEDLSLSSYSVKTTDKPSRSKFLADAPTKRKLLSKSHPQRSYFGGPHRWLRVQSESHTPSLSEGIYTRQSDIDLPLETPLSIPHSPTTSYSLDEYRQPYRESKPNVRRIFVESCSKTSPCRDAPHWEEEEEKGSRGATASGARPGYSSTSEAQDVDSDEQTNEQVSEILSSTL.

A disordered region spans residues R119 to E236. Residues P144–C154 show a composition bias toward polar residues. A compositionally biased stretch (low complexity) spans S171–P186. Residues L223–E236 show a composition bias toward basic and acidic residues. ANK repeat units follow at residues Q419–L450 and E456–P485. The 97-residue stretch at A556 to S652 folds into the Fibronectin type-III domain. Residues G893–K900 are highly conserved peptide sequence. 3 disordered regions span residues V1134 to L1179, L1321 to P1343, and K1361 to L1418. Polar residues predominate over residues K1136–Y1146. Positions N1407–L1418 are enriched in polar residues.

Its function is as follows. Required for vestibular-related functions. The chain is Ankyrin repeat and fibronectin type-III domain-containing protein 1 (ankfn1) from Danio rerio (Zebrafish).